Consider the following 352-residue polypeptide: Photosystem II D2 protein (352 aa).

Residues Cys40–Thr60 traverse the membrane as a helical segment. Position 117 (His117) interacts with chlorophyll a. The chain crosses the membrane as a helical span at residues Gly124–Pro140. Pheophytin a-binding residues include Gln129 and Asn142. Residues Val152–Ser165 form a helical membrane-spanning segment. His197 is a chlorophyll a binding site. Residues Ala207–Asp227 form a helical membrane-spanning segment. A plastoquinone contacts are provided by His214 and Phe261. His214 contacts Fe cation. His268 serves as a coordination point for Fe cation. Residues Gly278 to Arg294 traverse the membrane as a helical segment.

Belongs to the reaction center PufL/M/PsbA/D family. As to quaternary structure, PSII is composed of 1 copy each of membrane proteins PsbA, PsbB, PsbC, PsbD, PsbE, PsbF, PsbH, PsbI, PsbJ, PsbK, PsbL, PsbM, PsbT, PsbY, PsbZ, Psb30/Ycf12, at least 3 peripheral proteins of the oxygen-evolving complex and a large number of cofactors. It forms dimeric complexes. The cofactor is The D1/D2 heterodimer binds P680, chlorophylls that are the primary electron donor of PSII, and subsequent electron acceptors. It shares a non-heme iron and each subunit binds pheophytin, quinone, additional chlorophylls, carotenoids and lipids. There is also a Cl(-1) ion associated with D1 and D2, which is required for oxygen evolution. The PSII complex binds additional chlorophylls, carotenoids and specific lipids..

Its subcellular location is the plastid. It is found in the chloroplast thylakoid membrane. The enzyme catalyses 2 a plastoquinone + 4 hnu + 2 H2O = 2 a plastoquinol + O2. In terms of biological role, photosystem II (PSII) is a light-driven water:plastoquinone oxidoreductase that uses light energy to abstract electrons from H(2)O, generating O(2) and a proton gradient subsequently used for ATP formation. It consists of a core antenna complex that captures photons, and an electron transfer chain that converts photonic excitation into a charge separation. The D1/D2 (PsbA/PsbD) reaction center heterodimer binds P680, the primary electron donor of PSII as well as several subsequent electron acceptors. D2 is needed for assembly of a stable PSII complex. The sequence is that of Photosystem II D2 protein from Bigelowiella natans (Pedinomonas minutissima).